The chain runs to 145 residues: Large ribosomal subunit protein bL9 (145 aa).

Belongs to the bacterial ribosomal protein bL9 family.

In terms of biological role, binds to the 23S rRNA. In Mesomycoplasma hyopneumoniae (strain 7448) (Mycoplasma hyopneumoniae), this protein is Large ribosomal subunit protein bL9.